The sequence spans 422 residues: MPSIAPFLRTTPLFTISLLLRLGLLFYGIYQDAHSALKYTDIDYLVFTDASRFVADGQSPYARDTYRYTPLLAWILLPTVRFPAFGKLVFAAADLLAGWLILRVLRRRGMDEATAGGFSALWLWNPMVATISTRGSSEGLLGVLTMGLLWAVDRRKFSLAAIILGLSVHFKIYPFIYAPAIVWWMDDARLGKETKAAPQSSSIKDAVANFFTPDRLKFGLLSLITFMILNLVMFAIYETPFLVHTYFHHVTRIDHRHNFSPYNVLLYLTSATPAHAAPAFRIESFAFLPQLLLSCVLIPLALAKRDLATSMMAQTFAFVTFNKVCTSQYFLWYMIFLPLYLPNSSFLRNGKLGIFALLLWIVSQAAWLQQGYELEFLGISTFYPGLWLASIAFFLVNCWILGVIISDGARQSTRSTVKFHVE.

Helical transmembrane passes span 10–30, 82–102, 162–182, 216–236, 282–302, 327–347, 352–372, and 385–405; these read TTPL…YGIY, FPAF…WLIL, IILG…PAIV, LKFG…MFAI, IESF…PLAL, SQYF…SSFL, LGIF…QQGY, and GLWL…GVII.

This sequence belongs to the PIGM family.

The protein localises to the endoplasmic reticulum membrane. It functions in the pathway glycolipid biosynthesis; glycosylphosphatidylinositol-anchor biosynthesis. Mannosyltransferase involved in glycosylphosphatidylinositol-anchor biosynthesis. Transfers the first alpha-1,4-mannose to GlcN-acyl-PI during GPI precursor assembly. Required for cell wall integrity. This Gibberella zeae (strain ATCC MYA-4620 / CBS 123657 / FGSC 9075 / NRRL 31084 / PH-1) (Wheat head blight fungus) protein is GPI mannosyltransferase 1 (GPI14).